The following is a 721-amino-acid chain: Exo beta-1,2-glucooligosaccharide sophorohydrolase (non-reducing end) (721 aa).

An N-terminal signal peptide occupies residues 1–18; it reads MKHIALLTTLLLSASLQA. Positions 474–708 constitute a Glycoamylase-like domain; it reads NHKLIGWNET…LLWNLFMSHP (235 aa).

Monomer.

Its subcellular location is the periplasm. It carries out the reaction [(1-&gt;2)-beta-D-glucosyl](n) + H2O = [(1-&gt;2)-beta-D-glucosyl](n-2) + sophorose. Functionally, catalyzes the hydrolysis of linear beta-1,2-glucan and beta-1,2-glucooligosaccharides with degrees of polymerization (DPs) greater than or equal to 4, to produce sophorose. The best substrates are tetra- and pentasaccharides. Acts as an exo-type enzyme that releases sophorose from the non-reducing end of the substrate. It cannot hydrolyze cyclic beta-1,2-glucans. In Parabacteroides distasonis (strain ATCC 8503 / DSM 20701 / CIP 104284 / JCM 5825 / NCTC 11152), this protein is Exo beta-1,2-glucooligosaccharide sophorohydrolase (non-reducing end).